Reading from the N-terminus, the 217-residue chain is Adenylate kinase (217 aa).

10-15 (GAGKGT) provides a ligand contact to ATP. The segment at 30–59 (STGDILRAAVSEMTPMGVKAKGYMESGALV) is NMP. Residues T31, R36, 57 to 59 (ALV), 85 to 88 (GFPR), and Q92 contribute to the AMP site. Positions 126–163 (GRRTCRLCGKGYHVVFDPPRVSGRCDECLGELFQRDDD) are LID. An ATP-binding site is contributed by R127. Residues C130, C133, C150, and C153 each contribute to the Zn(2+) site. Positions 160 and 171 each coordinate AMP. G199 contributes to the ATP binding site.

This sequence belongs to the adenylate kinase family. Monomer.

It is found in the cytoplasm. It carries out the reaction AMP + ATP = 2 ADP. It functions in the pathway purine metabolism; AMP biosynthesis via salvage pathway; AMP from ADP: step 1/1. Functionally, catalyzes the reversible transfer of the terminal phosphate group between ATP and AMP. Plays an important role in cellular energy homeostasis and in adenine nucleotide metabolism. The polypeptide is Adenylate kinase (Geotalea uraniireducens (strain Rf4) (Geobacter uraniireducens)).